The following is a 1273-amino-acid chain: DNA-directed RNA polymerase subunit beta (1273 aa).

It belongs to the RNA polymerase beta chain family. In terms of assembly, the RNAP catalytic core consists of 2 alpha, 1 beta, 1 beta' and 1 omega subunit. When a sigma factor is associated with the core the holoenzyme is formed, which can initiate transcription.

It carries out the reaction RNA(n) + a ribonucleoside 5'-triphosphate = RNA(n+1) + diphosphate. Its function is as follows. DNA-dependent RNA polymerase catalyzes the transcription of DNA into RNA using the four ribonucleoside triphosphates as substrates. In Onion yellows phytoplasma (strain OY-M), this protein is DNA-directed RNA polymerase subunit beta.